The chain runs to 437 residues: 3-ketoacyl-CoA thiolase (437 aa).

The active-site Acyl-thioester intermediate is the Cys99. Catalysis depends on proton acceptor residues His392 and Cys422.

The protein belongs to the thiolase-like superfamily. Thiolase family. Heterotetramer of two alpha chains (FadJ) and two beta chains (FadI).

The protein localises to the cytoplasm. The enzyme catalyses an acyl-CoA + acetyl-CoA = a 3-oxoacyl-CoA + CoA. It functions in the pathway lipid metabolism; fatty acid beta-oxidation. Catalyzes the final step of fatty acid oxidation in which acetyl-CoA is released and the CoA ester of a fatty acid two carbons shorter is formed. The chain is 3-ketoacyl-CoA thiolase from Pectobacterium carotovorum subsp. carotovorum (strain PC1).